The chain runs to 201 residues: Holliday junction branch migration complex subunit RuvA (201 aa).

The tract at residues Met1–Gly64 is domain I. Residues Thr65–Ser143 form a domain II region. Residues Phe144–Ala153 form a flexible linker region. Residues Ala153–Arg201 form a domain III region.

It belongs to the RuvA family. As to quaternary structure, homotetramer. Forms an RuvA(8)-RuvB(12)-Holliday junction (HJ) complex. HJ DNA is sandwiched between 2 RuvA tetramers; dsDNA enters through RuvA and exits via RuvB. An RuvB hexamer assembles on each DNA strand where it exits the tetramer. Each RuvB hexamer is contacted by two RuvA subunits (via domain III) on 2 adjacent RuvB subunits; this complex drives branch migration. In the full resolvosome a probable DNA-RuvA(4)-RuvB(12)-RuvC(2) complex forms which resolves the HJ.

It localises to the cytoplasm. Functionally, the RuvA-RuvB-RuvC complex processes Holliday junction (HJ) DNA during genetic recombination and DNA repair, while the RuvA-RuvB complex plays an important role in the rescue of blocked DNA replication forks via replication fork reversal (RFR). RuvA specifically binds to HJ cruciform DNA, conferring on it an open structure. The RuvB hexamer acts as an ATP-dependent pump, pulling dsDNA into and through the RuvAB complex. HJ branch migration allows RuvC to scan DNA until it finds its consensus sequence, where it cleaves and resolves the cruciform DNA. This chain is Holliday junction branch migration complex subunit RuvA, found in Methylococcus capsulatus (strain ATCC 33009 / NCIMB 11132 / Bath).